Reading from the N-terminus, the 74-residue chain is ATP synthase subunit c (74 aa).

The next 2 helical transmembrane spans lie at 8 to 28 (FIGIGFMAIGMYGAALGVSNI) and 52 to 72 (IGAGLAEAMGLFSFVIAMLLI).

This sequence belongs to the ATPase C chain family. As to quaternary structure, F-type ATPases have 2 components, F(1) - the catalytic core - and F(0) - the membrane proton channel. F(1) has five subunits: alpha(3), beta(3), gamma(1), delta(1), epsilon(1). F(0) has three main subunits: a(1), b(2) and c(10-14). The alpha and beta chains form an alternating ring which encloses part of the gamma chain. F(1) is attached to F(0) by a central stalk formed by the gamma and epsilon chains, while a peripheral stalk is formed by the delta and b chains.

It localises to the cell inner membrane. F(1)F(0) ATP synthase produces ATP from ADP in the presence of a proton or sodium gradient. F-type ATPases consist of two structural domains, F(1) containing the extramembraneous catalytic core and F(0) containing the membrane proton channel, linked together by a central stalk and a peripheral stalk. During catalysis, ATP synthesis in the catalytic domain of F(1) is coupled via a rotary mechanism of the central stalk subunits to proton translocation. Its function is as follows. Key component of the F(0) channel; it plays a direct role in translocation across the membrane. A homomeric c-ring of between 10-14 subunits forms the central stalk rotor element with the F(1) delta and epsilon subunits. This Rickettsia prowazekii (strain Madrid E) protein is ATP synthase subunit c.